A 317-amino-acid polypeptide reads, in one-letter code: Acetyl-coenzyme A carboxylase carboxyl transferase subunit alpha (317 aa).

The CoA carboxyltransferase C-terminal domain occupies 40–294 (RLQKKSEELT…KARLLTDLED (255 aa)).

It belongs to the AccA family. In terms of assembly, acetyl-CoA carboxylase is a heterohexamer composed of biotin carboxyl carrier protein (AccB), biotin carboxylase (AccC) and two subunits each of ACCase subunit alpha (AccA) and ACCase subunit beta (AccD).

Its subcellular location is the cytoplasm. It carries out the reaction N(6)-carboxybiotinyl-L-lysyl-[protein] + acetyl-CoA = N(6)-biotinyl-L-lysyl-[protein] + malonyl-CoA. Its pathway is lipid metabolism; malonyl-CoA biosynthesis; malonyl-CoA from acetyl-CoA: step 1/1. Component of the acetyl coenzyme A carboxylase (ACC) complex. First, biotin carboxylase catalyzes the carboxylation of biotin on its carrier protein (BCCP) and then the CO(2) group is transferred by the carboxyltransferase to acetyl-CoA to form malonyl-CoA. This chain is Acetyl-coenzyme A carboxylase carboxyl transferase subunit alpha, found in Actinobacillus succinogenes (strain ATCC 55618 / DSM 22257 / CCUG 43843 / 130Z).